Reading from the N-terminus, the 199-residue chain is SCO2-like protein RBE_0029 (199 aa).

This sequence belongs to the SCO1/2 family.

The protein is SCO2-like protein RBE_0029 of Rickettsia bellii (strain RML369-C).